Reading from the N-terminus, the 434-residue chain is Beta-enolase (434 aa).

Ser-2 bears the N-acetylserine mark. Positions 158 and 167 each coordinate substrate. The active-site Proton donor is Glu-210. Positions 245, 293, and 318 each coordinate Mg(2+). Substrate contacts are provided by Glu-293 and Asp-318. Lys-343 functions as the Proton acceptor in the catalytic mechanism. Substrate-binding positions include 370-373 (SHRS) and Lys-394.

Belongs to the enolase family. As to quaternary structure, homodimer. Interacts with PNKD. The cofactor is Mg(2+).

The protein resides in the cytoplasm. It carries out the reaction (2R)-2-phosphoglycerate = phosphoenolpyruvate + H2O. The protein operates within carbohydrate degradation; glycolysis; pyruvate from D-glyceraldehyde 3-phosphate: step 4/5. Its function is as follows. Glycolytic enzyme that catalyzes the conversion of 2-phosphoglycerate to phosphoenolpyruvate. In Gallus gallus (Chicken), this protein is Beta-enolase (ENO3).